Reading from the N-terminus, the 372-residue chain is tRNA-specific 2-thiouridylase MnmA (372 aa).

Residues 16-23 (GMSGGVDS) and Met42 each bind ATP. The segment at 102–104 (NPD) is interaction with target base in tRNA. The Nucleophile role is filled by Cys107. Cys107 and Cys205 are disulfide-bonded. ATP is bound at residue Gly132. An interaction with tRNA region spans residues 155-157 (KDQ). Cys205 functions as the Cysteine persulfide intermediate in the catalytic mechanism. Positions 317–318 (RY) are interaction with tRNA.

This sequence belongs to the MnmA/TRMU family.

Its subcellular location is the cytoplasm. The catalysed reaction is S-sulfanyl-L-cysteinyl-[protein] + uridine(34) in tRNA + AH2 + ATP = 2-thiouridine(34) in tRNA + L-cysteinyl-[protein] + A + AMP + diphosphate + H(+). Its function is as follows. Catalyzes the 2-thiolation of uridine at the wobble position (U34) of tRNA, leading to the formation of s(2)U34. The sequence is that of tRNA-specific 2-thiouridylase MnmA from Shewanella sp. (strain ANA-3).